The chain runs to 303 residues: 34 kDa antigenic protein homolog (303 aa).

The next 4 helical transmembrane spans lie at 42-62 (IAVA…MFTL), 77-97 (TGLP…ALVP), 102-122 (HVTV…SATF), and 134-154 (LWVV…ALLV). 2 stretches are compositionally biased toward low complexity: residues 194–207 (QGAQ…SPGP) and 215–255 (GYGS…HQGP). Positions 194–303 (QGAQQAAGLQ…QSSSPGGAPV (110 aa)) are disordered. The segment covering 256 to 271 (STPPTGFPSFSPPPPV) has biased composition (pro residues). The segment covering 274-286 (GTGSQAGSAPVNY) has biased composition (polar residues). Positions 287 to 303 (SNPSGGEQSSSPGGAPV) are enriched in low complexity.

To M.paratuberculosis 34 kDa antigenic protein.

The protein resides in the cell membrane. The sequence is that of 34 kDa antigenic protein homolog from Mycobacterium bovis (strain ATCC BAA-935 / AF2122/97).